The primary structure comprises 205 residues: Small ribosomal subunit protein uS4 (205 aa).

The disordered stretch occupies residues 18 to 46; that stretch reads NIWGRPKSPVNRREYGPGQHGQRRKGKLS. Residues 94–157 form the S4 RNA-binding domain; it reads RRLDTVVFRA…KQLAIVLEAT (64 aa).

It belongs to the universal ribosomal protein uS4 family. As to quaternary structure, part of the 30S ribosomal subunit. Contacts protein S5. The interaction surface between S4 and S5 is involved in control of translational fidelity.

In terms of biological role, one of the primary rRNA binding proteins, it binds directly to 16S rRNA where it nucleates assembly of the body of the 30S subunit. With S5 and S12 plays an important role in translational accuracy. In Bradyrhizobium sp. (strain BTAi1 / ATCC BAA-1182), this protein is Small ribosomal subunit protein uS4.